The following is a 775-amino-acid chain: Venom dipeptidyl peptidase 4 (775 aa).

The signal sequence occupies residues 1 to 23 (MEVLVQLALLLVVHGSLVVLVAG). N-linked (GlcNAc...) asparagine glycans are attached at residues N68 and N239. Disulfide bonds link C450/C453 and C463/C481. N473, N505, N578, and N631 each carry an N-linked (GlcNAc...) asparagine glycan. Catalysis depends on S639, which acts as the Charge relay system. C659 and C770 are oxidised to a cystine. N689 and N694 each carry an N-linked (GlcNAc...) asparagine glycan. Active-site charge relay system residues include D718 and H750.

This sequence belongs to the peptidase S9B family. DPPIV subfamily. Expressed by the venom duct.

The protein localises to the secreted. It catalyses the reaction Release of an N-terminal dipeptide, Xaa-Yaa-|-Zaa-, from a polypeptide, preferentially when Yaa is Pro, provided Zaa is neither Pro nor hydroxyproline.. With respect to regulation, inhibited by diprotin A. Functionally, venom dipeptidyl-peptidase which removes N-terminal dipeptides sequentially from polypeptides having unsubstituted N-termini provided that the penultimate residue is proline. May process promelittin into its active form and/or modulate the chemotactic activity of immune cells after the insect sting. This chain is Venom dipeptidyl peptidase 4, found in Apis mellifera (Honeybee).